We begin with the raw amino-acid sequence, 90 residues long: Probable Fe(2+)-trafficking protein (90 aa).

The protein belongs to the Fe(2+)-trafficking protein family. As to quaternary structure, monomer.

Its function is as follows. Could be a mediator in iron transactions between iron acquisition and iron-requiring processes, such as synthesis and/or repair of Fe-S clusters in biosynthetic enzymes. This chain is Probable Fe(2+)-trafficking protein, found in Proteus mirabilis (strain HI4320).